A 585-amino-acid chain; its full sequence is Arginine--tRNA ligase (585 aa).

The short motif at Ala-131–His-141 is the 'HIGH' region element.

The protein belongs to the class-I aminoacyl-tRNA synthetase family. In terms of assembly, monomer.

It is found in the cytoplasm. The catalysed reaction is tRNA(Arg) + L-arginine + ATP = L-arginyl-tRNA(Arg) + AMP + diphosphate. The polypeptide is Arginine--tRNA ligase (Agrobacterium fabrum (strain C58 / ATCC 33970) (Agrobacterium tumefaciens (strain C58))).